We begin with the raw amino-acid sequence, 106 residues long: MADFLGMMKQAAQLQSKMKAMQAELDQIEVEGLSGGGLVKVRMSAKMEVRGISIDPSLIKADEREVLEDLLAAAHGDAHRKAEAAMQEKMQALTGGLGLPPGLGLG.

This sequence belongs to the YbaB/EbfC family. In terms of assembly, homodimer.

It localises to the cytoplasm. The protein resides in the nucleoid. Its function is as follows. Binds to DNA and alters its conformation. May be involved in regulation of gene expression, nucleoid organization and DNA protection. This is Nucleoid-associated protein RPA0616 from Rhodopseudomonas palustris (strain ATCC BAA-98 / CGA009).